The chain runs to 320 residues: ATP-dependent 6-phosphofructokinase (320 aa).

Residue G12 participates in ATP binding. Residues 22–26 and 55–60 contribute to the ADP site; these read RGVVR and RYSVSD. Residues 73–74 and 103–106 each bind ATP; these read RF and GDGS. D104 is a binding site for Mg(2+). 126-128 contacts substrate; that stretch reads TID. D128 (proton acceptor) is an active-site residue. R155 serves as a coordination point for ADP. Substrate contacts are provided by residues R163 and 170–172; that span reads MGR. ADP contacts are provided by residues 186–188, K212, and 214–216; these read GCE and KKH. Substrate contacts are provided by residues E223, R244, and 250–253; that span reads HIQR.

Belongs to the phosphofructokinase type A (PFKA) family. ATP-dependent PFK group I subfamily. Prokaryotic clade 'B1' sub-subfamily. As to quaternary structure, homotetramer. Mg(2+) is required as a cofactor.

The protein localises to the cytoplasm. The enzyme catalyses beta-D-fructose 6-phosphate + ATP = beta-D-fructose 1,6-bisphosphate + ADP + H(+). It functions in the pathway carbohydrate degradation; glycolysis; D-glyceraldehyde 3-phosphate and glycerone phosphate from D-glucose: step 3/4. Allosterically activated by ADP and other diphosphonucleosides, and allosterically inhibited by phosphoenolpyruvate. Its function is as follows. Catalyzes the phosphorylation of D-fructose 6-phosphate to fructose 1,6-bisphosphate by ATP, the first committing step of glycolysis. This is ATP-dependent 6-phosphofructokinase from Buchnera aphidicola subsp. Schizaphis graminum (strain Sg).